The sequence spans 505 residues: Flagellin (505 aa).

The protein belongs to the bacterial flagellin family.

The protein localises to the secreted. Its subcellular location is the bacterial flagellum. In terms of biological role, flagellin is the subunit protein which polymerizes to form the filaments of bacterial flagella. In Salmonella montevideo, this protein is Flagellin (fliC).